We begin with the raw amino-acid sequence, 528 residues long: GMP synthase [glutamine-hydrolyzing] (528 aa).

The Glutamine amidotransferase type-1 domain occupies 13–204; sequence AIVILDFGSQ…VNHICGCEQD (192 aa). The active-site Nucleophile is the C90. Residues H178 and E180 contribute to the active site. A GMPS ATP-PPase domain is found at 205-403; sequence WTTNAFIDEA…LGLPEEIVRR (199 aa). 232–238 is an ATP binding site; that stretch reads SGGVDSS.

Homodimer.

The enzyme catalyses XMP + L-glutamine + ATP + H2O = GMP + L-glutamate + AMP + diphosphate + 2 H(+). It functions in the pathway purine metabolism; GMP biosynthesis; GMP from XMP (L-Gln route): step 1/1. Its function is as follows. Catalyzes the synthesis of GMP from XMP. The polypeptide is GMP synthase [glutamine-hydrolyzing] (Synechococcus sp. (strain CC9902)).